Reading from the N-terminus, the 1012-residue chain is Structural polyprotein (1012 aa).

A divalent metal cation is bound at residue Asp-30. The region spanning 513 to 755 is the Peptidase S50 domain; sequence ADKGYEVVAN…AGRQYHLAMA (243 aa). Ser-652 functions as the Nucleophile in the catalytic mechanism. Residue Lys-692 is part of the active site. Residues 970–1012 form a disordered region; it reads MEMKHRNPRRAPPKPKPKPNAPTQRPPGRLGRWIRTVSDEDLE. Basic residues predominate over residues 975 to 986; sequence RNPRRAPPKPKP. Positions 1003–1012 are interaction with VP1 protein; it reads IRTVSDEDLE.

Homotrimer. A central divalent metal stabilizes the VP2 trimer. Interacts with host ITGA4/ITGB1. In terms of assembly, homodimer. Interacts (via C-terminus) with VP1 in the cytoplasm. Interacts with VP2. Post-translationally, specific enzymatic cleavages yield mature proteins. The capsid assembly seems to be regulated by polyprotein processing. The protease VP4 cleaves itself off the polyprotein, thus releasing pre-VP2 and VP3 within the infected cell. During capsid assembly, the C-terminus of pre-VP2 is further processed by VP4, giving rise to VP2, the external capsid protein and three small peptides that all stay closely associated with the capsid.

It localises to the virion. Its subcellular location is the host cytoplasm. Its function is as follows. Capsid protein VP2 self assembles to form an icosahedral capsid with a T=13 symmetry, about 70 nm in diameter, and consisting of 260 VP2 trimers. The capsid encapsulates the genomic dsRNA. VP2 is also involved in attachment and entry into the host cell by interacting with host ITGA4/ITGB1. Functionally, the precursor of VP2 plays an important role in capsid assembly. First, pre-VP2 and VP2 oligomers assemble to form a procapsid. Then, the pre-VP2 intermediates may be processed into VP2 proteins by proteolytic cleavage mediated by VP4 to obtain the mature virion. The final capsid is composed of pentamers and hexamers but VP2 has a natural tendency to assemble into all-pentameric structures. Therefore pre-VP2 may be required to allow formation of the hexameric structures. Protease VP4 is a serine protease that cleaves the polyprotein into its final products. Pre-VP2 is first partially cleaved, and may be completely processed by VP4 upon capsid maturation. In terms of biological role, capsid protein VP3 plays a key role in virion assembly by providing a scaffold for the capsid made of VP2. May self-assemble to form a T=4-like icosahedral inner-capsid composed of at least 180 trimers. Plays a role in genomic RNA packaging by recruiting VP1 into the capsid and interacting with the dsRNA genome segments to form a ribonucleoprotein complex. Additionally, the interaction of the VP3 C-terminal tail with VP1 removes the inherent structural blockade of the polymerase active site. Thus, VP3 can also function as a transcriptional activator. Its function is as follows. Structural peptide 1 is a small peptide derived from pre-VP2 C-terminus. It destabilizes and perforates cell membranes, suggesting a role during entry. Functionally, structural peptide 2 is a small peptide derived from pVP2 C-terminus. It is not essential for the virus viability, but viral growth is affected when missing. Structural peptide 3 is a small peptide derived from pVP2 C-terminus. It is not essential for the virus viability, but viral growth is affected when missing. In terms of biological role, structural peptide 4 is a small peptide derived from pVP2 C-terminus. It is essential for the virus viability. The polypeptide is Structural polyprotein (Avian infectious bursal disease virus (strain E) (IBDV)).